A 484-amino-acid chain; its full sequence is ATP-dependent rRNA helicase RRP3 (484 aa).

Low complexity-rich tracts occupy residues 1-14 and 22-34; these read MPSPSPEASSSMSQ and PSPASSNPDAPEA. A disordered region spans residues 1-38; the sequence is MPSPSPEASSSMSQPGPPSRSPSPASSNPDAPEASHNK. The Q motif signature appears at 38 to 66; the sequence is KTFADLGISPELCRACASMGFKKPSDIQA. Positions 69–240 constitute a Helicase ATP-binding domain; it reads IPHALEGKDI…RASLNKPVRV (172 aa). Residue 82–89 participates in ATP binding; sequence AQTGSGKT. The DEAD box motif lies at 188–191; the sequence is DEAD. Residues 263–411 form the Helicase C-terminal domain; that stretch reads NKDAYLLYLA…SFDVDKEAVA (149 aa). A disordered region spans residues 425–484; the sequence is ALEMRESGTGGGGGKRGRDKGKRKTFGDGDDRDRDDDVVEAGVPRKKNKFTPGGKKKARK. 2 stretches are compositionally biased toward basic residues: residues 439–448 and 468–484; these read KRGRDKGKRK and PRKKNKFTPGGKKKARK.

Belongs to the DEAD box helicase family. DDX47/RRP3 subfamily. As to quaternary structure, interacts with the SSU processome.

It localises to the nucleus. The catalysed reaction is ATP + H2O = ADP + phosphate + H(+). ATP-dependent rRNA helicase required for pre-ribosomal RNA processing. Involved in the maturation of the 35S-pre-rRNA and to its cleavage to mature 18S rRNA. This chain is ATP-dependent rRNA helicase RRP3, found in Cryptococcus neoformans var. neoformans serotype D (strain B-3501A) (Filobasidiella neoformans).